A 205-amino-acid chain; its full sequence is Cytochrome c oxidase subunit 2 (205 aa).

The Cu cation site is built by histidine 115, cysteine 150, glutamate 152, cysteine 154, histidine 158, and methionine 161. Glutamate 152 lines the Mg(2+) pocket.

Belongs to the cytochrome c oxidase subunit 2 family. Component of the cytochrome c oxidase (complex IV, CIV), a multisubunit enzyme composed of a catalytic core of 3 subunits and several supernumerary subunits. The complex exists as a monomer or a dimer and forms supercomplexes (SCs) in the inner mitochondrial membrane with ubiquinol-cytochrome c oxidoreductase (cytochrome b-c1 complex, complex III, CIII). Requires Cu cation as cofactor.

Its subcellular location is the mitochondrion inner membrane. The enzyme catalyses 4 Fe(II)-[cytochrome c] + O2 + 8 H(+)(in) = 4 Fe(III)-[cytochrome c] + 2 H2O + 4 H(+)(out). In terms of biological role, component of the cytochrome c oxidase, the last enzyme in the mitochondrial electron transport chain which drives oxidative phosphorylation. The respiratory chain contains 3 multisubunit complexes succinate dehydrogenase (complex II, CII), ubiquinol-cytochrome c oxidoreductase (cytochrome b-c1 complex, complex III, CIII) and cytochrome c oxidase (complex IV, CIV), that cooperate to transfer electrons derived from NADH and succinate to molecular oxygen, creating an electrochemical gradient over the inner membrane that drives transmembrane transport and the ATP synthase. Cytochrome c oxidase is the component of the respiratory chain that catalyzes the reduction of oxygen to water. Electrons originating from reduced cytochrome c in the intermembrane space (IMS) are transferred via the dinuclear copper A center (CU(A)) of subunit 2 and heme A of subunit 1 to the active site in subunit 1, a binuclear center (BNC) formed by heme A3 and copper B (CU(B)). The BNC reduces molecular oxygen to 2 water molecules using 4 electrons from cytochrome c in the IMS and 4 protons from the mitochondrial matrix. This is Cytochrome c oxidase subunit 2 (COII) from Paramecium tetraurelia.